The chain runs to 197 residues: Imidazoleglycerol-phosphate dehydratase (197 aa).

The protein belongs to the imidazoleglycerol-phosphate dehydratase family.

The protein resides in the cytoplasm. It catalyses the reaction D-erythro-1-(imidazol-4-yl)glycerol 3-phosphate = 3-(imidazol-4-yl)-2-oxopropyl phosphate + H2O. It participates in amino-acid biosynthesis; L-histidine biosynthesis; L-histidine from 5-phospho-alpha-D-ribose 1-diphosphate: step 6/9. This is Imidazoleglycerol-phosphate dehydratase from Hahella chejuensis (strain KCTC 2396).